The primary structure comprises 2104 residues: Myosin type-2 heavy chain 2 (2104 aa).

In terms of domain architecture, Myosin N-terminal SH3-like spans 35-85 (DERTWIWIPDSKESFVKAWIVEDLGEKYRVKLERDGSERIVDGFDAEKVNP). Residues 89–767 (DMVDDMAALT…VLGSLEDRRN (679 aa)) form the Myosin motor domain. 182 to 189 (GESGAGKT) lines the ATP pocket. Residues 646–660 (LSSLMHQLEATQPHF) are actin-binding. Residues 829–2104 (LGTTQTDEYL…RSNRSPSVLR (1276 aa)) adopt a coiled-coil conformation. Disordered regions lie at residues 1245–1278 (NRSVTQHTLDGNSPHPSFEEKHSGDPLKRIDGNN) and 1398–1426 (MEFTGLKPLSPSKISNLPSSQPGSPSKRS). The span at 1246–1259 (RSVTQHTLDGNSPH) shows a compositional bias: polar residues. A compositionally biased stretch (basic and acidic residues) spans 1261–1278 (SFEEKHSGDPLKRIDGNN). Over residues 1409–1424 (SKISNLPSSQPGSPSK) the composition is skewed to polar residues. A Phosphoserine modification is found at serine 1421.

Belongs to the TRAFAC class myosin-kinesin ATPase superfamily. Myosin family. Binds to cdc4 and rlc1.

Functionally, stabilizes the F-actin cables forming the F-actin ring that surrounds the nucleus during interphase. May work in conjunction with myo2. The polypeptide is Myosin type-2 heavy chain 2 (myo3) (Schizosaccharomyces pombe (strain 972 / ATCC 24843) (Fission yeast)).